The sequence spans 195 residues: Imidazoleglycerol-phosphate dehydratase (195 aa).

It belongs to the imidazoleglycerol-phosphate dehydratase family.

The protein resides in the cytoplasm. The enzyme catalyses D-erythro-1-(imidazol-4-yl)glycerol 3-phosphate = 3-(imidazol-4-yl)-2-oxopropyl phosphate + H2O. It functions in the pathway amino-acid biosynthesis; L-histidine biosynthesis; L-histidine from 5-phospho-alpha-D-ribose 1-diphosphate: step 6/9. In Paraburkholderia xenovorans (strain LB400), this protein is Imidazoleglycerol-phosphate dehydratase.